The following is a 370-amino-acid chain: MSPLAAAKRLIVKIGSSLLVDDSTGQVRRGWLETLAADIAACKARGQEVIVVSSGAVAVGRRKLGLVPPLKLEEKQAAAATGQIRLAHAWQDALAHHQITVAQVLLTLDDSENRRRYLNARSTLETLLKLGAVPVINENDTVATAEIRVGDNDRLAARVAQMVSADALVLFSDIDGLYTADPRKDPDARFIPEVHELTPEIEAMAGDPGSAYGSGGMVTKLVAARICLSAGCRMAITRGEPMHPLKTIEDGGRCTWFLPNSEPRTARKQWIFGSMKPTGTLVLDAGAARALAQGRSLLPAGITEVSGAFERGDCVLVKDGSGKVLGRGLVAYSADDSRAIMGRKSGEIEAILGFRGRDELIHRDDLVMEG.

An ATP-binding site is contributed by Lys-13. Substrate is bound by residues Ser-54, Asp-140, and Asn-152. ATP is bound by residues 172–173 (SD) and 214–220 (SGGMVTK). In terms of domain architecture, PUA spans 278–355 (TGTLVLDAGA…GEIEAILGFR (78 aa)).

This sequence belongs to the glutamate 5-kinase family.

The protein resides in the cytoplasm. It catalyses the reaction L-glutamate + ATP = L-glutamyl 5-phosphate + ADP. It participates in amino-acid biosynthesis; L-proline biosynthesis; L-glutamate 5-semialdehyde from L-glutamate: step 1/2. Its function is as follows. Catalyzes the transfer of a phosphate group to glutamate to form L-glutamate 5-phosphate. This Paramagnetospirillum magneticum (strain ATCC 700264 / AMB-1) (Magnetospirillum magneticum) protein is Glutamate 5-kinase.